The following is a 262-amino-acid chain: Glycerol uptake facilitator protein (262 aa).

At 1 to 7 (MNFCSKK) the chain is on the cytoplasmic side. The chain crosses the membrane as a helical span at residues 8-36 (KILKQCFFEFLGTGLIIFLGISSLVVSKL). Residues 37–41 (TNFHF) lie on the Extracellular side of the membrane. The chain crosses the membrane as a helical span at residues 42-62 (NHCEISCIWGLGVFISICFCS). The Cytoplasmic segment spans residues 63–65 (SVS). Residues 66 to 69 (GAHL) lie within the membrane without spanning it. An NPA 1 motif is present at residues 70-72 (NPA). An intramembrane region (helical) is located at residues 70–80 (NPAITIFLFLS). The Cytoplasmic segment spans residues 81–86 (SQFNKK). A helical transmembrane segment spans residues 87–110 (KVIPYILSQISGTFFFTFLIYLIF). Residues 111–145 (NNLLNSFESKYNIVRGTKKSLELASLFCVFPKENY) are Extracellular-facing. The chain crosses the membrane as a helical span at residues 146–171 (NFIHDFILEILIGIIFIIILMKLSEK). Topologically, residues 172-180 (NNLFKFYKF) are cytoplasmic. A helical membrane pass occupies residues 181-197 (INPFLIGTLVIIINLFL). At 198 to 201 (TSYS) the chain is on the extracellular side. The stretch at 202–205 (NITL) is an intramembrane region. The NPA 2 motif lies at 206–208 (NPA). An intramembrane region (helical) is located at residues 206–219 (NPARDLGPRIFLSL). The Extracellular portion of the chain corresponds to 220–234 (IGWGKLAFTGDDNII). A helical membrane pass occupies residues 235–259 (FPYFLIPTIAPIIGINLGGWIYILY). Residues 260 to 262 (IKK) lie on the Cytoplasmic side of the membrane.

This sequence belongs to the MIP/aquaporin (TC 1.A.8) family.

The protein localises to the cell membrane. The catalysed reaction is glycerol(in) = glycerol(out). In terms of biological role, mediates glycerol diffusion across the cytoplasmic membrane via a pore-type mechanism. The polypeptide is Glycerol uptake facilitator protein (glpF) (Buchnera aphidicola subsp. Schizaphis graminum (strain Sg)).